The sequence spans 64 residues: Alternative prion protein (64 aa).

The tract at residues 1–22 (MEHWGEPIPGTGQSWRQPLSTS) is disordered. Residues 11 to 22 (TGQSWRQPLSTS) show a composition bias toward polar residues. The chain crosses the membrane as a helical span at residues 40–58 (WRWLGSAPWWWLGTATWWW).

It localises to the mitochondrion outer membrane. The chain is Alternative prion protein from Ovis aries (Sheep).